The chain runs to 922 residues: Hexokinase-3 (922 aa).

Positions 1–23 are disordered; that stretch reads MATIGPSGLHPGERASVCPHEGV. 2 Hexokinase domains span residues 25-469 and 475-911; these read RPSG…MVTA and AAHR…LVTA. The interval 82-218 is hexokinase small subdomain 1; sequence HGTEQGDFLV…TYRIDVVAMV (137 aa). Residue 93 to 100 participates in ATP binding; the sequence is ELGATGAS. 93-102 provides a ligand contact to D-glucose 6-phosphate; that stretch reads ELGATGASLR. D-glucose-binding positions include Ser166, 183–184, and 219–220; these read TK and ND. The segment at 219 to 458 is hexokinase large subdomain 1; the sequence is NDTVGTMMGC…CDVSFIPSVD (240 aa). D-glucose 6-phosphate contacts are provided by Asp220 and Thr243. D-glucose is bound by residues Asn246, Glu271, and 302 to 305; that span reads QRFE. 424 to 426 provides a ligand contact to D-glucose 6-phosphate; that stretch reads GGR. Residues 436–437 and 540–545 each bind ATP; these read RI and DLGGTN. The tract at residues 529–660 is hexokinase small subdomain 2; the sequence is DGSERGDFLA…AVELNVVAIV (132 aa). 540–544 provides a ligand contact to D-glucose 6-phosphate; it reads DLGGT. D-glucose contacts are provided by residues 608-609, 625-626, and 661-662; these read SF, TK, and ND. The hexokinase large subdomain 2 stretch occupies residues 661–900; the sequence is NDTVGTMMSC…CTVTFLQSED (240 aa). Positions 662 and 685 each coordinate D-glucose 6-phosphate. Thr685 contributes to the ATP binding site. D-glucose contacts are provided by residues 687-688, Glu713, and Glu747; that span reads TN. ATP is bound by residues 752–753, 789–793, and 868–872; these read GM, TKFLS, and TLYKL. D-glucose 6-phosphate is bound by residues 866–868 and Ser902; that span reads DGT.

The protein belongs to the hexokinase family.

The enzyme catalyses a D-hexose + ATP = a D-hexose 6-phosphate + ADP + H(+). It catalyses the reaction D-fructose + ATP = D-fructose 6-phosphate + ADP + H(+). The catalysed reaction is D-glucose + ATP = D-glucose 6-phosphate + ADP + H(+). Its pathway is carbohydrate metabolism; hexose metabolism. It participates in carbohydrate degradation; glycolysis; D-glyceraldehyde 3-phosphate and glycerone phosphate from D-glucose: step 1/4. Hexokinase is an allosteric enzyme inhibited by its product D-glucose 6-phosphate. Functionally, catalyzes the phosphorylation of hexose, such as D-glucose and D-fructose, to hexose 6-phosphate (D-glucose 6-phosphate and D-fructose 6-phosphate, respectively). Mediates the initial step of glycolysis by catalyzing phosphorylation of D-glucose to D-glucose 6-phosphate. The sequence is that of Hexokinase-3 from Mus musculus (Mouse).